We begin with the raw amino-acid sequence, 193 residues long: Peptidyl-tRNA hydrolase (193 aa).

Residue tyrosine 16 participates in tRNA binding. Histidine 21 acts as the Proton acceptor in catalysis. Residues phenylalanine 67, asparagine 69, and asparagine 115 each contribute to the tRNA site.

This sequence belongs to the PTH family. As to quaternary structure, monomer.

It is found in the cytoplasm. It catalyses the reaction an N-acyl-L-alpha-aminoacyl-tRNA + H2O = an N-acyl-L-amino acid + a tRNA + H(+). Hydrolyzes ribosome-free peptidyl-tRNAs (with 1 or more amino acids incorporated), which drop off the ribosome during protein synthesis, or as a result of ribosome stalling. In terms of biological role, catalyzes the release of premature peptidyl moieties from peptidyl-tRNA molecules trapped in stalled 50S ribosomal subunits, and thus maintains levels of free tRNAs and 50S ribosomes. The polypeptide is Peptidyl-tRNA hydrolase (Psychrobacter cryohalolentis (strain ATCC BAA-1226 / DSM 17306 / VKM B-2378 / K5)).